The following is a 108-amino-acid chain: Pumilarin (108 aa).

A propeptide spanning residues 1-38 (MTETKNEIKLHVLFGALAVGFLMLALFSFSLQMLPVAD) is cleaved from the precursor. The segment at residues 39–108 (LAKEFGIPGS…KKGRKAVIAW (70 aa)) is a cross-link (cyclopeptide (Leu-Trp)).

Post-translationally, the cross-link permits a high resistance to proteolysis. Is more resistant to specific proteases than to unspecific proteases.

It localises to the secreted. Cyclopeptide antibiotic that inhibits both Gram-positive and Gram-negative bacteria. Shows potent to weak activities against M.flavus (MIC=3 ug/ml), B.cereus (MIC=12 ug/ml), B.pumilus (MIC=12 ug/ml), E.coli (MIC=12 ug/ml), and S.pneumoniae (MIC=47 ug/ml). May act by forming pores. This is Pumilarin from Bacillus safensis.